Consider the following 137-residue polypeptide: Small ribosomal subunit protein uS12 (137 aa).

Positions Met31–Pro41 are enriched in polar residues. Residues Met31–Lys57 form a disordered region. Asp102 carries the post-translational modification 3-methylthioaspartic acid.

This sequence belongs to the universal ribosomal protein uS12 family. In terms of assembly, part of the 30S ribosomal subunit. Contacts proteins S8 and S17. May interact with IF1 in the 30S initiation complex.

Functionally, with S4 and S5 plays an important role in translational accuracy. Interacts with and stabilizes bases of the 16S rRNA that are involved in tRNA selection in the A site and with the mRNA backbone. Located at the interface of the 30S and 50S subunits, it traverses the body of the 30S subunit contacting proteins on the other side and probably holding the rRNA structure together. The combined cluster of proteins S8, S12 and S17 appears to hold together the shoulder and platform of the 30S subunit. This Oenococcus oeni (strain ATCC BAA-331 / PSU-1) protein is Small ribosomal subunit protein uS12.